The chain runs to 475 residues: Ribulose bisphosphate carboxylase large chain (475 aa).

A propeptide spanning residues 1 to 2 (MS) is cleaved from the precursor. N-acetylproline is present on Pro-3. Residue Lys-14 is modified to N6,N6,N6-trimethyllysine. 2 residues coordinate substrate: Asn-123 and Thr-173. The active-site Proton acceptor is Lys-175. Position 177 (Lys-177) interacts with substrate. Residues Lys-201, Asp-203, and Glu-204 each contribute to the Mg(2+) site. N6-carboxylysine is present on Lys-201. His-294 (proton acceptor) is an active-site residue. Substrate contacts are provided by Arg-295, His-327, and Ser-379.

This sequence belongs to the RuBisCO large chain family. Type I subfamily. In terms of assembly, heterohexadecamer of 8 large chains and 8 small chains; disulfide-linked. The disulfide link is formed within the large subunit homodimers. Requires Mg(2+) as cofactor. The disulfide bond which can form in the large chain dimeric partners within the hexadecamer appears to be associated with oxidative stress and protein turnover.

The protein resides in the plastid. It localises to the chloroplast. The catalysed reaction is 2 (2R)-3-phosphoglycerate + 2 H(+) = D-ribulose 1,5-bisphosphate + CO2 + H2O. The enzyme catalyses D-ribulose 1,5-bisphosphate + O2 = 2-phosphoglycolate + (2R)-3-phosphoglycerate + 2 H(+). Functionally, ruBisCO catalyzes two reactions: the carboxylation of D-ribulose 1,5-bisphosphate, the primary event in carbon dioxide fixation, as well as the oxidative fragmentation of the pentose substrate in the photorespiration process. Both reactions occur simultaneously and in competition at the same active site. In Mesostigma viride (Green alga), this protein is Ribulose bisphosphate carboxylase large chain.